A 269-amino-acid chain; its full sequence is Glutamate racemase (269 aa).

Substrate-binding positions include 14-15 (DS) and 46-47 (YS). C78 (proton donor/acceptor) is an active-site residue. Position 79–80 (79–80 (NT)) interacts with substrate. The Proton donor/acceptor role is filled by C189. Residue 190 to 191 (TH) participates in substrate binding.

The protein belongs to the aspartate/glutamate racemases family.

It carries out the reaction L-glutamate = D-glutamate. It participates in cell wall biogenesis; peptidoglycan biosynthesis. Functionally, provides the (R)-glutamate required for cell wall biosynthesis. The sequence is that of Glutamate racemase from Haemophilus influenzae (strain PittGG).